The following is a 1432-amino-acid chain: DNA-directed RNA polymerase subunit beta (1432 aa).

This sequence belongs to the RNA polymerase beta chain family. The RNAP catalytic core consists of 2 alpha, 1 beta, 1 beta' and 1 omega subunit. When a sigma factor is associated with the core the holoenzyme is formed, which can initiate transcription.

It carries out the reaction RNA(n) + a ribonucleoside 5'-triphosphate = RNA(n+1) + diphosphate. Functionally, DNA-dependent RNA polymerase catalyzes the transcription of DNA into RNA using the four ribonucleoside triphosphates as substrates. In Solibacter usitatus (strain Ellin6076), this protein is DNA-directed RNA polymerase subunit beta.